Here is a 365-residue protein sequence, read N- to C-terminus: 5-hydroxytryptamine receptor 1F (365 aa).

The Extracellular portion of the chain corresponds to 1 to 24; that stretch reads MDFLNSSDQNLTSEELLNRMPSKI. N-linked (GlcNAc...) asparagine glycosylation is found at Asn-5 and Asn-10. Residues 25-49 form a helical membrane-spanning segment; sequence LVSLTLSGLALMTTTINSLVIAAII. Topologically, residues 50–59 are cytoplasmic; it reads VTRKLHHPAN. The helical transmembrane segment at 60–81 threads the bilayer; that stretch reads YLICSLAVTDFLVAVLVMPFSI. At 82-96 the chain is on the extracellular side; that stretch reads VYIVRESWIMGQVVC. Cys-96 and Cys-172 are oxidised to a cystine. The helical transmembrane segment at 97–119 threads the bilayer; sequence DIWLSVDITCCTCSILHLSAIAL. The serotonin site is built by Asp-103 and Cys-107. A DRY motif; important for ligand-induced conformation changes motif is present at residues 120-122; that stretch reads DRY. The Cytoplasmic portion of the chain corresponds to 120 to 139; that stretch reads DRYRAITDAVEYARKRTPKH. The chain crosses the membrane as a helical span at residues 140-159; it reads AGIMITIVWIISVFISMPPL. Over 160–178 the chain is Extracellular; that stretch reads FWRHQGTSRDDECIIKHDH. Residues 179–202 form a helical membrane-spanning segment; sequence IVSTIYSTFGAFYIPLALILILYY. Residues 203-291 lie on the Cytoplasmic side of the membrane; it reads KIYRAAKTLY…KISGTRERKA (89 aa). Residues 292–315 traverse the membrane as a helical segment; that stretch reads ATTLGLILGAFVICWLPFFVKELV. Over 316–327 the chain is Extracellular; the sequence is VNVCDKCKISEE. A helical membrane pass occupies residues 328–350; that stretch reads MSNFLAWLGYLNSLINPLIYTIF. An NPxxY motif; important for ligand-induced conformation changes and signaling motif is present at residues 343-347; that stretch reads NPLIY. The Cytoplasmic portion of the chain corresponds to 351 to 365; the sequence is NEDFKKAFQKLVRCR.

Belongs to the G-protein coupled receptor 1 family.

The protein localises to the cell membrane. In terms of biological role, G-protein coupled receptor for 5-hydroxytryptamine (serotonin). Also functions as a receptor for various alkaloids and psychoactive substances. Ligand binding causes a conformation change that triggers signaling via guanine nucleotide-binding proteins (G proteins) and modulates the activity of downstream effectors, such as adenylate cyclase. HTR1F is coupled to G(i)/G(o) G alpha proteins and mediates inhibitory neurotransmission by inhibiting adenylate cyclase activity. This is 5-hydroxytryptamine receptor 1F (HTR1F) from Pan troglodytes (Chimpanzee).